The sequence spans 580 residues: FAD-dependent monooxygenase yanF (580 aa).

The segment at 1–21 (MSSSAECRPIGWGGWGPDPNT) is disordered. The FAD-binding PCMH-type domain occupies 150–322 (CRLNASCIVT…VEYDLTTNTG (173 aa)). At H187 the chain carries Pros-8alpha-FAD histidine.

It belongs to the oxygen-dependent FAD-linked oxidoreductase family.

The protein operates within secondary metabolite biosynthesis; terpenoid biosynthesis. Functionally, FAD-dependent monooxygenase; part of the gene cluster that mediates the biosynthesis of yanuthone D, a fungal isoprenoid epoxycyclohexenone that acts as an antibiotic against fungi and bacteria. The first step of the pathway is the synthesis of 6-methylsalicylic acid (6-MSA) by the polyketide synthase yanA. 6-MSA is then converted to m-cresol by the decarboxylase yanB. The cytochrome P450 monooxygenase yanC then catalyzes the oxidation of m-cresol to toluquinol. Epoxidation of toluquinol is then performed by the short chain dehydrogenase yanD, with the help of yanE, and a further prenylated by yanG leads to 7-deacetoxyyanuthone A. The next step is the hydroxylation of C-22 of 7-deacetoxyyanuthone A by the cytochrome P450 monooxygenase yanH to yield 22-deacetylyanuthone A. O-Mevalon transferase yanI then attaches mevalon to the hydroxyl group of 22-deacetylyanuthone A to produce yanuthone E. Finally, the FAD-dependent monooxygenase yanF oxidizes the hydroxyl group at C15 of yanuthone E to form yanuthone D. Furthermore, several branching points in the pathway lead to the production of yanuthones F and G from 7-deacetoxyyanuthone A; yanuthones H and I from 22-deacetylyanuthone A; and yanuthone J from yanuthone E. In Aspergillus niger (strain ATCC 1015 / CBS 113.46 / FGSC A1144 / LSHB Ac4 / NCTC 3858a / NRRL 328 / USDA 3528.7), this protein is FAD-dependent monooxygenase yanF.